The chain runs to 1172 residues: MLEGCILAVSSQSKSAKAITNNSVPGAPNRISFAKLREPLEVPGLLDVQTESFDWLIGADSWRQRATARGDVNPTGGLEEVLTELSPIEDFSGSMSLSFSDPRFDEVKAPVDECKDKDMTYAAPLFVTAEFINNNTGEIKSQTVFMGDFPMMTEKGTFIINGTERVVVSQLVRSPGVYFDESIDKSTEKTLHSVKVIPGRGAWLEFDVDKRDTVGVRIDRKRRQPVTVLLKALGWTNEQITERFGFSEIMMSTLEKDNTAGTDEALLDIYRKLRPGEPPTKESAQTLLENLFFKEKRYDLARVGRYKVNKKLGLNTDKPITSSTLTEEDVVATIEYLVRLHQGDTVMTVPGGVEVPVEVDDIDHFGNRRLRTVGELIQNQIRVGLSRMERVVRERMTTQDVEAITPQTLINIRPVVAAIKEFFGTSQLSQFMDQNNPLSGLTHKRRLSALGPGGLSRERAGLEVRDVHSSHYGRMCPIETPEGPNIGLIGSLSVYARVNPFGFIETPYRKVENGVVTDQIDYLTADEEDRHVVAQANSPLDDEGHFTEDRVLVRRKGGEVEFVSATEVDYMDVSPRQMVSVATAMIPFLEHDDANRALMGANMQRQAVPLVRSEAPLVGTGMELRAAIDAGDVVVSEKAGVVEEVSADYITVMADDGTRHTYRMRKFARSNHGTCANQRPIVDAGQRVEAGQVVADGPCTQNGEMALGKNLLVAIMPWEGHNYEDAIILSNRLVEEDVLTSIHIEEHEIDARDTKLGAEEITRDIPNVSDEVLADLDERGIVRIGAEVRDGDILVGKVTPKGETELTPEERLLRAIFGEKAREVRDTSLKVPHGESGKVIGIRVFSREDDDELPAGVNELVRVYVAQKRKISDGDKLAGRHGNKGVIGKILPVEDMPFLPDGTPVDIILNTHGVPRRMNIGQILETHLGWVAKAGWNINVAGADGVPDWAEKLPEELYSAPSDSIVATPVFDGARENELSGLLASTLPNRDGDVMVNEDGKAELFDGRSGEPFPYPVTVGYMYILKLHHLVDDKIHARSTGPYSMITQQPLGGKAQFGGQRFGEMECWAMQAYGAAYTLQELLTIKSDDTVGRVKVYEAIVKGENIPEPGIPESFKVLLKELQSLCLNVEVLSSDGAAIEMRDGDDEDLERAAANLGINLSRNESASVEDLA.

Belongs to the RNA polymerase beta chain family. The RNAP catalytic core consists of 2 alpha, 1 beta, 1 beta' and 1 omega subunit. When a sigma factor is associated with the core the holoenzyme is formed, which can initiate transcription.

The enzyme catalyses RNA(n) + a ribonucleoside 5'-triphosphate = RNA(n+1) + diphosphate. Functionally, DNA-dependent RNA polymerase catalyzes the transcription of DNA into RNA using the four ribonucleoside triphosphates as substrates. The sequence is that of DNA-directed RNA polymerase subunit beta from Mycobacterium sp. (strain KMS).